We begin with the raw amino-acid sequence, 432 residues long: Meiotically up-regulated gene 134 protein (432 aa).

This sequence belongs to the UPF0300 family.

It localises to the cytoplasm. Its subcellular location is the cell cortex. Its function is as follows. Has a role in meiosis. The chain is Meiotically up-regulated gene 134 protein (mug134) from Schizosaccharomyces pombe (strain 972 / ATCC 24843) (Fission yeast).